The primary structure comprises 384 residues: F-box/kelch-repeat protein At3g44120 (384 aa).

An F-box domain is found at 1–46 (MTLPELPKDLVEEILCFVPATSLKRLRSSCKEWNRLFKDDKRFARK). 3 Kelch repeats span residues 156 to 202 (CNKS…RECF), 264 to 314 (SVLV…FLLD), and 352 to 384 (GVQTIGGYSPIIVNYVPSLGQIELAGSKRKRDY).

The protein is F-box/kelch-repeat protein At3g44120 of Arabidopsis thaliana (Mouse-ear cress).